The sequence spans 280 residues: 4-diphosphocytidyl-2-C-methyl-D-erythritol kinase (280 aa).

Lysine 8 is a catalytic residue. Proline 91–threonine 101 lines the ATP pocket. Residue aspartate 133 is part of the active site.

Belongs to the GHMP kinase family. IspE subfamily.

It carries out the reaction 4-CDP-2-C-methyl-D-erythritol + ATP = 4-CDP-2-C-methyl-D-erythritol 2-phosphate + ADP + H(+). The protein operates within isoprenoid biosynthesis; isopentenyl diphosphate biosynthesis via DXP pathway; isopentenyl diphosphate from 1-deoxy-D-xylulose 5-phosphate: step 3/6. Its function is as follows. Catalyzes the phosphorylation of the position 2 hydroxy group of 4-diphosphocytidyl-2C-methyl-D-erythritol. In Clostridium botulinum (strain 657 / Type Ba4), this protein is 4-diphosphocytidyl-2-C-methyl-D-erythritol kinase.